We begin with the raw amino-acid sequence, 208 residues long: Holliday junction resolvase RecU (208 aa).

The Mg(2+) site is built by Thr-86, Asp-88, Glu-101, and Gln-120.

Belongs to the RecU family. Mg(2+) is required as a cofactor.

It localises to the cytoplasm. The catalysed reaction is Endonucleolytic cleavage at a junction such as a reciprocal single-stranded crossover between two homologous DNA duplexes (Holliday junction).. Its function is as follows. Endonuclease that resolves Holliday junction intermediates in genetic recombination. Cleaves mobile four-strand junctions by introducing symmetrical nicks in paired strands. Promotes annealing of linear ssDNA with homologous dsDNA. Required for DNA repair, homologous recombination and chromosome segregation. The chain is Holliday junction resolvase RecU from Lacticaseibacillus casei (strain BL23) (Lactobacillus casei).